Consider the following 259-residue polypeptide: Type III pantothenate kinase (259 aa).

Residue 6-13 coordinates ATP; sequence DIGNTNVV. Position 107 to 110 (107 to 110) interacts with substrate; it reads GADR. Aspartate 109 acts as the Proton acceptor in catalysis. Residue aspartate 129 coordinates K(+). An ATP-binding site is contributed by threonine 132. Threonine 184 is a substrate binding site.

The protein belongs to the type III pantothenate kinase family. In terms of assembly, homodimer. NH4(+) serves as cofactor. K(+) is required as a cofactor.

Its subcellular location is the cytoplasm. The enzyme catalyses (R)-pantothenate + ATP = (R)-4'-phosphopantothenate + ADP + H(+). The protein operates within cofactor biosynthesis; coenzyme A biosynthesis; CoA from (R)-pantothenate: step 1/5. In terms of biological role, catalyzes the phosphorylation of pantothenate (Pan), the first step in CoA biosynthesis. This is Type III pantothenate kinase from Thermomicrobium roseum (strain ATCC 27502 / DSM 5159 / P-2).